The following is a 183-amino-acid chain: UPF0397 protein VSAL_I1988 (183 aa).

5 helical membrane passes run 8–28 (VVVI…MFGI), 41–61 (AVLA…VGFI), 74–94 (VWLT…LFPI), 110–130 (FFIF…TSAF), and 147–167 (LCII…FILT).

The protein belongs to the UPF0397 family.

It is found in the cell membrane. This chain is UPF0397 protein VSAL_I1988, found in Aliivibrio salmonicida (strain LFI1238) (Vibrio salmonicida (strain LFI1238)).